Consider the following 61-residue polypeptide: Large ribosomal subunit protein bL32 (61 aa).

It belongs to the bacterial ribosomal protein bL32 family.

The polypeptide is Large ribosomal subunit protein bL32 (Hyphomonas neptunium (strain ATCC 15444)).